The sequence spans 417 residues: NADH-quinone oxidoreductase subunit D (417 aa).

This sequence belongs to the complex I 49 kDa subunit family. NDH-1 is composed of 14 different subunits. Subunits NuoB, C, D, E, F, and G constitute the peripheral sector of the complex.

It localises to the cell inner membrane. It carries out the reaction a quinone + NADH + 5 H(+)(in) = a quinol + NAD(+) + 4 H(+)(out). Functionally, NDH-1 shuttles electrons from NADH, via FMN and iron-sulfur (Fe-S) centers, to quinones in the respiratory chain. The immediate electron acceptor for the enzyme in this species is believed to be ubiquinone. Couples the redox reaction to proton translocation (for every two electrons transferred, four hydrogen ions are translocated across the cytoplasmic membrane), and thus conserves the redox energy in a proton gradient. The chain is NADH-quinone oxidoreductase subunit D from Legionella pneumophila (strain Corby).